Consider the following 403-residue polypeptide: Tryptophan synthase beta chain (403 aa).

Lysine 96 bears the N6-(pyridoxal phosphate)lysine mark.

This sequence belongs to the TrpB family. As to quaternary structure, tetramer of two alpha and two beta chains. Pyridoxal 5'-phosphate serves as cofactor.

It catalyses the reaction (1S,2R)-1-C-(indol-3-yl)glycerol 3-phosphate + L-serine = D-glyceraldehyde 3-phosphate + L-tryptophan + H2O. The protein operates within amino-acid biosynthesis; L-tryptophan biosynthesis; L-tryptophan from chorismate: step 5/5. In terms of biological role, the beta subunit is responsible for the synthesis of L-tryptophan from indole and L-serine. This Ralstonia nicotianae (strain ATCC BAA-1114 / GMI1000) (Ralstonia solanacearum) protein is Tryptophan synthase beta chain.